The following is a 329-amino-acid chain: UDP-N-acetylenolpyruvoylglucosamine reductase (329 aa).

The 165-residue stretch at 28-192 (RVGGPADLLC…ARVEVRLHAG (165 aa)) folds into the FAD-binding PCMH-type domain. The active site involves Arg-172. The segment at 202–227 (REDRERRRATQPLDRPTFGSTFTNPP) is disordered. Ser-221 (proton donor) is an active-site residue. Glu-291 is an active-site residue. The tract at residues 307 to 329 (DGHAAAGGGPGAASGGVRPPEAT) is disordered. The segment covering 311 to 320 (AAGGGPGAAS) has biased composition (gly residues).

This sequence belongs to the MurB family. It depends on FAD as a cofactor.

It is found in the cytoplasm. It carries out the reaction UDP-N-acetyl-alpha-D-muramate + NADP(+) = UDP-N-acetyl-3-O-(1-carboxyvinyl)-alpha-D-glucosamine + NADPH + H(+). The protein operates within cell wall biogenesis; peptidoglycan biosynthesis. Its function is as follows. Cell wall formation. In Anaeromyxobacter sp. (strain K), this protein is UDP-N-acetylenolpyruvoylglucosamine reductase.